Reading from the N-terminus, the 266-residue chain is uncharacterized protein (266 aa).

This is an uncharacterized protein from Mycobacterium tuberculosis (strain CDC 1551 / Oshkosh).